The primary structure comprises 128 residues: MTTSSYFLLVALGLLLYVCRSSFGSEHTCESDASPHPQGVCGSPLAEAVEAACELEQSLQGGTGKKRGRASLLRKRRAFLSMLKARAKRNEASPLQRSGRGIVCECCKNHCNIEELTEYCPPVTEGSG.

The first 24 residues, 1-24, serve as a signal peptide directing secretion; sequence MTTSSYFLLVALGLLLYVCRSSFG. 4 cysteine pairs are disulfide-bonded: cysteine 29-cysteine 104, cysteine 41-cysteine 107, cysteine 53-cysteine 120, and cysteine 106-cysteine 111. Residues 59–89 constitute a propeptide, c peptide; it reads LQGGTGKKRGRASLLRKRRAFLSMLKARAKR. Position 115 is a 4-carboxyglutamate; partial (glutamate 115). A Serine amide modification is found at serine 127.

This sequence belongs to the insulin family. Heterodimer of A and B chains; disulfide-linked. As to expression, expressed by the venom gland.

It localises to the secreted. Functionally, this venom insulin facilitates prey capture by rapidly inducing hypoglycemic shock. Intraperitoneal injection of this peptide into zebrafish lowers blood glucose with the same potency than human insulin. In vivo, when applied to water, this peptide reduces overall locomotor activity of zebrafish larvae, observed as a significant decrease in the percentage of time spent swimming and movement frequency. The polypeptide is Con-Ins F2c (Conus floridulus (Cone snail)).